Consider the following 185-residue polypeptide: Elongation factor P (185 aa).

Belongs to the elongation factor P family.

Its subcellular location is the cytoplasm. It functions in the pathway protein biosynthesis; polypeptide chain elongation. In terms of biological role, involved in peptide bond synthesis. Stimulates efficient translation and peptide-bond synthesis on native or reconstituted 70S ribosomes in vitro. Probably functions indirectly by altering the affinity of the ribosome for aminoacyl-tRNA, thus increasing their reactivity as acceptors for peptidyl transferase. The chain is Elongation factor P from Burkholderia mallei (strain NCTC 10247).